A 1109-amino-acid polypeptide reads, in one-letter code: Ankyrin repeat- and BTB/POZ domain-containing protein 3 (1109 aa).

The chain crosses the membrane as a helical span at residues 168 to 188 (IVLSWGLAAHCTAAALAALSL). The disordered stretch occupies residues 260–302 (SCSGPGPGSSSGSGPGPGSGPGAPAADKERETPGGGAASGGPC). The span at 264 to 280 (PGPGSSSGSGPGPGSGP) shows a compositional bias: gly residues. ANK repeat units follow at residues 608–637 (QGMTPLMYACVRGDEAMVQMLLDAGADLNV), 654–683 (RHWTALTFAVLHGHIPVVQLLLDAGAKVEG), 692–721 (YSETPLQLAAAVGNFELVSLLLERGADPLI), 735–764 (GDMNSFSQAAAHGHRNVFRKLLAQPEKEKS), and 830–859 (TWLESLRIAFQQHRRPLIQCLLKEFKTIQE). The BTB domain maps to 928–994 (SDVTFLVEGR…LYYGGPESLL (67 aa)).

It is found in the membrane. The polypeptide is Ankyrin repeat- and BTB/POZ domain-containing protein 3 (Abtb3) (Mus musculus (Mouse)).